The chain runs to 140 residues: UPF0102 protein Ppro_1186 (140 aa).

The interval 1–27 is disordered; it reads MKRPGDGRQESPSSTARPDNRNTGSRG. Residues 10 to 25 are compositionally biased toward polar residues; sequence ESPSSTARPDNRNTGS.

This sequence belongs to the UPF0102 family.

The protein is UPF0102 protein Ppro_1186 of Pelobacter propionicus (strain DSM 2379 / NBRC 103807 / OttBd1).